We begin with the raw amino-acid sequence, 174 residues long: MTQQAIFAGGCFWCVEAVFNQIKGVEKATSGYINGTTENPTYKEVCTGETGHAEAVKVEFDATVISYEKLLDIFFSIHNPTQLNHQGEDVGTQYRTGIYYLNDEQEQLANKKIAELQPHFAEKIVTEVLPAQTFYPAEDYHQGYLLQNPQNSYCNLVATPKFLKAKVKFEEIWK.

Residue Cys-11 is part of the active site.

The protein belongs to the MsrA Met sulfoxide reductase family.

The catalysed reaction is L-methionyl-[protein] + [thioredoxin]-disulfide + H2O = L-methionyl-(S)-S-oxide-[protein] + [thioredoxin]-dithiol. The enzyme catalyses [thioredoxin]-disulfide + L-methionine + H2O = L-methionine (S)-S-oxide + [thioredoxin]-dithiol. In terms of biological role, has an important function as a repair enzyme for proteins that have been inactivated by oxidation. Catalyzes the reversible oxidation-reduction of methionine sulfoxide in proteins to methionine. This is Peptide methionine sulfoxide reductase MsrA from Pasteurella multocida (strain Pm70).